Consider the following 212-residue polypeptide: Thymidylate kinase (212 aa).

Position 7–14 (7–14) interacts with ATP; it reads GGEGCGKT.

It belongs to the thymidylate kinase family.

It catalyses the reaction dTMP + ATP = dTDP + ADP. Phosphorylation of dTMP to form dTDP in both de novo and salvage pathways of dTTP synthesis. The chain is Thymidylate kinase from Gloeobacter violaceus (strain ATCC 29082 / PCC 7421).